We begin with the raw amino-acid sequence, 565 residues long: Methionine--tRNA ligase (565 aa).

The 'HIGH' region signature appears at 16 to 26 (PYAYGVPHLGN). Cys148, Cys151, Cys161, and Cys164 together coordinate Zn(2+). Positions 338 to 342 (KFSKS) match the 'KMSKS' region motif. An ATP-binding site is contributed by Lys341.

The protein belongs to the class-I aminoacyl-tRNA synthetase family. MetG type 1 subfamily. It depends on Zn(2+) as a cofactor.

The protein localises to the cytoplasm. The catalysed reaction is tRNA(Met) + L-methionine + ATP = L-methionyl-tRNA(Met) + AMP + diphosphate. Is required not only for elongation of protein synthesis but also for the initiation of all mRNA translation through initiator tRNA(fMet) aminoacylation. The chain is Methionine--tRNA ligase from Thermofilum pendens (strain DSM 2475 / Hrk 5).